A 200-amino-acid polypeptide reads, in one-letter code: 3-isopropylmalate dehydratase small subunit (200 aa).

This sequence belongs to the LeuD family. LeuD type 1 subfamily. In terms of assembly, heterodimer of LeuC and LeuD.

It carries out the reaction (2R,3S)-3-isopropylmalate = (2S)-2-isopropylmalate. Its pathway is amino-acid biosynthesis; L-leucine biosynthesis; L-leucine from 3-methyl-2-oxobutanoate: step 2/4. Catalyzes the isomerization between 2-isopropylmalate and 3-isopropylmalate, via the formation of 2-isopropylmaleate. This Aliivibrio salmonicida (strain LFI1238) (Vibrio salmonicida (strain LFI1238)) protein is 3-isopropylmalate dehydratase small subunit.